A 475-amino-acid chain; its full sequence is Ribulose bisphosphate carboxylase large chain (475 aa).

Positions 1–2 are excised as a propeptide; the sequence is MS. Residue P3 is modified to N-acetylproline. Residue K14 is modified to N6,N6,N6-trimethyllysine. Substrate is bound by residues N123 and T173. Residue K175 is the Proton acceptor of the active site. K177 contributes to the substrate binding site. 3 residues coordinate Mg(2+): K201, D203, and E204. The residue at position 201 (K201) is an N6-carboxylysine. H294 acts as the Proton acceptor in catalysis. Residues R295, H327, and S379 each contribute to the substrate site.

It belongs to the RuBisCO large chain family. Type I subfamily. As to quaternary structure, heterohexadecamer of 8 large chains and 8 small chains; disulfide-linked. The disulfide link is formed within the large subunit homodimers. The cofactor is Mg(2+). The disulfide bond which can form in the large chain dimeric partners within the hexadecamer appears to be associated with oxidative stress and protein turnover.

Its subcellular location is the plastid. The protein resides in the chloroplast. The catalysed reaction is 2 (2R)-3-phosphoglycerate + 2 H(+) = D-ribulose 1,5-bisphosphate + CO2 + H2O. It carries out the reaction D-ribulose 1,5-bisphosphate + O2 = 2-phosphoglycolate + (2R)-3-phosphoglycerate + 2 H(+). Its function is as follows. RuBisCO catalyzes two reactions: the carboxylation of D-ribulose 1,5-bisphosphate, the primary event in carbon dioxide fixation, as well as the oxidative fragmentation of the pentose substrate in the photorespiration process. Both reactions occur simultaneously and in competition at the same active site. This Equisetum arvense (Field horsetail) protein is Ribulose bisphosphate carboxylase large chain.